A 194-amino-acid polypeptide reads, in one-letter code: Holliday junction branch migration complex subunit RuvA (194 aa).

The tract at residues 1 to 64 is domain I; that stretch reads MISRLTGKLV…EDAHLLFGFA (64 aa). The segment at 65 to 143 is domain II; that stretch reads TAEERKTFRQ…AHAVTDGLFA (79 aa). A flexible linker region spans residues 144 to 147; that stretch reads AAPA. Residues 147–194 are domain III; sequence AADETEDIVGTLLALGYSEREAKAAVKGVPEGTDVGEGVRLALKNLLK.

It belongs to the RuvA family. In terms of assembly, homotetramer. Forms an RuvA(8)-RuvB(12)-Holliday junction (HJ) complex. HJ DNA is sandwiched between 2 RuvA tetramers; dsDNA enters through RuvA and exits via RuvB. An RuvB hexamer assembles on each DNA strand where it exits the tetramer. Each RuvB hexamer is contacted by two RuvA subunits (via domain III) on 2 adjacent RuvB subunits; this complex drives branch migration. In the full resolvosome a probable DNA-RuvA(4)-RuvB(12)-RuvC(2) complex forms which resolves the HJ.

The protein localises to the cytoplasm. Functionally, the RuvA-RuvB-RuvC complex processes Holliday junction (HJ) DNA during genetic recombination and DNA repair, while the RuvA-RuvB complex plays an important role in the rescue of blocked DNA replication forks via replication fork reversal (RFR). RuvA specifically binds to HJ cruciform DNA, conferring on it an open structure. The RuvB hexamer acts as an ATP-dependent pump, pulling dsDNA into and through the RuvAB complex. HJ branch migration allows RuvC to scan DNA until it finds its consensus sequence, where it cleaves and resolves the cruciform DNA. This Neisseria meningitidis serogroup A / serotype 4A (strain DSM 15465 / Z2491) protein is Holliday junction branch migration complex subunit RuvA.